The chain runs to 952 residues: Protein translocase subunit SecA (952 aa).

ATP contacts are provided by residues Gln135, 153 to 157 (GEGKT), and Asp575. The segment covering 614-624 (RHESRRIDNQL) has biased composition (basic and acidic residues). Disordered stretches follow at residues 614-636 (RHES…DPGS) and 916-946 (VSAK…GKKY). Residues Cys938, Cys940, Cys949, and Cys950 each contribute to the Zn(2+) site.

It belongs to the SecA family. As to quaternary structure, monomer and homodimer. Part of the essential Sec protein translocation apparatus which comprises SecA, SecYEG and auxiliary proteins SecDF. Other proteins may also be involved. Zn(2+) is required as a cofactor.

The protein resides in the cell membrane. Its subcellular location is the cytoplasm. The enzyme catalyses ATP + H2O + cellular proteinSide 1 = ADP + phosphate + cellular proteinSide 2.. Functionally, part of the Sec protein translocase complex. Interacts with the SecYEG preprotein conducting channel. Has a central role in coupling the hydrolysis of ATP to the transfer of proteins into and across the cell membrane, serving as an ATP-driven molecular motor driving the stepwise translocation of polypeptide chains across the membrane. The protein is Protein translocase subunit SecA of Dehalococcoides mccartyi (strain ATCC BAA-2100 / JCM 16839 / KCTC 5957 / BAV1).